Consider the following 272-residue polypeptide: Undecaprenyl-diphosphatase (272 aa).

Helical transmembrane passes span Ser6–Ser26, Ala45–Trp65, Leu89–His109, Leu115–Ala135, Ala156–Ala176, Tyr189–Leu209, Ala221–Ile241, and Ile251–Phe271.

Belongs to the UppP family.

Its subcellular location is the cell inner membrane. It carries out the reaction di-trans,octa-cis-undecaprenyl diphosphate + H2O = di-trans,octa-cis-undecaprenyl phosphate + phosphate + H(+). In terms of biological role, catalyzes the dephosphorylation of undecaprenyl diphosphate (UPP). Confers resistance to bacitracin. The chain is Undecaprenyl-diphosphatase from Cronobacter sakazakii (strain ATCC BAA-894) (Enterobacter sakazakii).